A 1058-amino-acid chain; its full sequence is MAYRGGGRGGRGGEQRPPYSGRGDVPGRGGGGGGGGAPPYRPASGFVWPPPGMTPRPGPPQPQYPRPGPPAVVYGAPMPAAHHQGAYQPGGVYRAPSPGVPVIGGYARSTPVTIRAPPPSHSSAPAPYQPAAAAPAPSSSSTAPSATALAKEFEQKLFVSETALAPPAAVASAAAAPAGEASVESDKDLAPVSKKGLAHPARPGFGAAGKKVMIRANHFLVNVADNNLFHYDVSINPESKSRATNREVLNELIKLHGKTSLGGKLPAYDGRKSLYTAGSLPFESEEFVVKLIDPEKKDKERAEREYKITIRIAGRTDLYHLQQFLLGRQRDMPQETIQVLDVVLRESPSWNYVTVSRSFFSTQFGHRGDIGEGLECWRGYYQSLRPTQMGLSLNIDISATSFFKPVTVIQFVEEFLNIRDTSRPLSDRDRVKIKKALRGVRIETNHQEDQIRRYKITGITPIPMSQLIFPVDDNGTRKTVVQYFWDRYNYRLKYASWPCLQSGSDSRPVYLPMEVCKIVEGQRYSKKLNDKQVTNILRATCQRPQQREQSIHEMVLHNKYTEDRFAQEFGIKVCNDLVSVPARVLPPPMLKYHDSGREKTCAPSVGQWNMINKKMINGGTVDNWTCLSFSRMRPEEVQRFCGDLIQMCNATGMSFNPRPVVDVRSTNPNNIENALRDVHRRTSELLAREGKGGLQLLIVILPEVSGSYGKIKRVCETDLGIVSQCCLPRHASRPNKQYLENVALKINVKVGGRNTVLERAFIRNGIPFVSEVPTIIFGADVTHPPPGEDSASSIAAVVASMDWPEITKYRGLVSAQPHRQEIIEDLFSVGKDPVKVVNGGMIRELLIAFRKKTGRRPERIIFYRDGVSEGQFSHVLLHEMDAIRKACASLEEGYLPPVTFVVVQKRHHTRLFPEVHGRRDMTDKSGNILPGTVVDRQICHPTEFDFYLCSHAGIQGTSRPTHYHVLYDENHFTADALQSLTNNLCYTYARCTRAVSVVPPAYYAHLAAFRARYYVEGESSDGGSTPGSSGQAVAREGPVEVRQLPKIKENVKDVMFYC.

2 stretches are compositionally biased toward gly residues: residues 1 to 12 (MAYRGGGRGGRG) and 24 to 37 (DVPGRGGGGGGGGA). Disordered regions lie at residues 1-77 (MAYR…YGAP) and 115-147 (RAPPPSHSSAPAPYQPAAAAPAPSSSSTAPSAT). Pro residues predominate over residues 48–70 (WPPPGMTPRPGPPQPQYPRPGPP). Residues 121–147 (HSSAPAPYQPAAAAPAPSSSSTAPSAT) show a composition bias toward low complexity. The PAZ domain maps to 407–520 (TVIQFVEEFL…LPMEVCKIVE (114 aa)). Positions 696–1016 (LLIVILPEVS…AAFRARYYVE (321 aa)) constitute a Piwi domain.

It belongs to the argonaute family. Ago subfamily.

It is found in the nucleus. The protein resides in the nucleolus. Functionally, essential for the progression of premeiotic mitosis and meiosis during sporogenesis. Regulates the cell division of premeiotic germ cells, the proper modification of meiotic chromosomes, and the faithful progression of meiosis, probably via small RNA-mediated gene silencing. May be involved in histone H3 'Lys-9' demethylation in the pericentromeric region. This is Protein argonaute MEL1 (MEL1) from Oryza sativa subsp. japonica (Rice).